A 1637-amino-acid polypeptide reads, in one-letter code: MNKNSKKKLDFLPNKLNKYSIRRFTVGTASILVGATLIFGVANDQAEAAENNTTQKQDDSSDASKVKGNVQTIEQSSANSNESDIPEQVDVTKDTTEQASTEEKANTTEQASTEEKADTTEQATTEEAPKAEGTDKVETEEAPKAEETDKATTEEAPKAEETDKATEEAPKTEETDKATTEEAPAAEETSKAATEEAPKAEETSKAATEEAPKAEETEKTATEEAPKTEETDKVETEEAPKAEETSKAATEKAPKAEETNKVETEEAPAAEETNKAATEETPAVEDTNAKSNSNAQPSETERTQVVDTVAKDLYKKSEVTEAEKAEIEKVLPKDISNLSNEEIKKIALSEVLKETANKENAQPRATFRSVSSNARTTNVNYSATALRAAAQDTVTKKGTGNFTAHGDIIHKTYKEEFPNEGTLTAFNTNFNPNTGTKGALEYNDKIDFNKDFTITVPVANNNQGNTTGADGWGFMFTQGNGQDFLNQGGILRDKGMANASGFKIDTAYNNVNGKVDKLDADKTNNLSQIGAAKVGYGTFVKNGADGVTNQVGQNALNTKDKPVNKIIYADNTTNHLDGQFHGQRLNDVVLNYDAATSTITATYAGKTWKATTDDLGIDKSQKYNFLITSSHMQNRYSNGIMRTNLEGVTITTPQADLIDDVEVTKQPIPHKTIREFDPTLEPGSPDVIVQKGEDGEKTTTTPTKVDPDTGDVVERGEPTTEVTKNPVDEIVHFTPEEVPQGHKDEFDPNLPIDGTEEVPGKPGIKNPETGEVVTPPVDDVTKHGPKAGEPEVTKEEIPFEKKREFNPDLKPGEEKVTQEGQTGEKTTTTPTTINPLTGEKVGEGEPTTEVTKEPVDEITQFGGEEVPQGHKDEFDPNLPIDGTEEVPGKPGIKNPETGEVVTPPVDDVTKHGPKAGEPEVTKEEIPFEKKREFNPDLKPGEEKVTQEGQTGEKTTTTPTTINPLTGEKVGEGEPTTEVTKEPVDEITQFGGEEVPQGHKDEFDPNLPIDGTEEVPGKPGIKNPETGEVVTPPVDDVTKHGPKAGEPEVTKEEIPFEKKREFNPDLKPGEEKVTQEGQTGEKTTTTPTTINPLTGEKVGEGEPTTEVTKEPVDEITQFGGEEVPQGHKDEFDPNLPIDGTEEVPGKPGIKNPETGEVVTPPVDDVTKHGPKAGEPEVTKEEIPYETKRVLDPTMEPGSPDKVAQKGENGEKTTTTPTTINPLTGEKVGEGEPTTEVTKEPIDEIVNYAPEIIPHGTREEIDPNLPEGETKVIPGKDGLKDPETGEIIEEPQDEVIIHGAKDDSDADSDSDADSDSDADSDSDADSDSDADSDSDSDSDSDSDSDSDADSDSDSDSDSDADSDSDADSDSDADSDSDSDADSDSDSDADSDSDSDSDSDADSDSDSDSDSDADSDSDADSDSDSDSDSDADSDSDSDSDSDADSDSDADSDSDADSDSDADSDSDSDSDSDADSDSDADSDSDADSDSDADSDSDSDSDSDADSDSDSDSDSDSDADSDSDADSDSDSDADSDSDADSDSDADGDSDADSDSDADSDSDSDSDSDSDSDSDADSDSDSDSDSDADRDHNDKTDKPNNKELPDTGNDAQNNGTLFGSLFAALGGLFLVGRRRKNKNNEEK.

A signal peptide spans 1–48; sequence MNKNSKKKLDFLPNKLNKYSIRRFTVGTASILVGATLIFGVANDQAEA. 3 disordered regions span residues 49-305, 689-719, and 739-1611; these read AENN…RTQV, VQKG…GEPT, and PQGH…NGTL. Residues 56–65 show a composition bias toward basic and acidic residues; the sequence is KQDDSSDASK. Polar residues predominate over residues 69-83; it reads NVQTIEQSSANSNES. Basic and acidic residues-rich tracts occupy residues 90–106, 127–180, and 188–264; these read DVTK…EKAN, EAPK…KATT, and ETSK…KVET. Over residues 289–298 the composition is skewed to polar residues; it reads AKSNSNAQPS. 5 G5 domains span residues 654–737, 783–865, 911–993, 1039–1121, and 1167–1250; these read QADL…TPEE, HGPK…GGEE, and HGPK…APEI. Residues 779–817 show a composition bias toward basic and acidic residues; the sequence is DVTKHGPKAGEPEVTKEEIPFEKKREFNPDLKPGEEKVT. Residues 818–832 show a composition bias toward low complexity; the sequence is QEGQTGEKTTTTPTT. A compositionally biased stretch (basic and acidic residues) spans 907 to 945; sequence DVTKHGPKAGEPEVTKEEIPFEKKREFNPDLKPGEEKVT. The span at 946-960 shows a compositional bias: low complexity; it reads QEGQTGEKTTTTPTT. The span at 1035–1073 shows a compositional bias: basic and acidic residues; the sequence is DVTKHGPKAGEPEVTKEEIPFEKKREFNPDLKPGEEKVT. Over residues 1074 to 1088 the composition is skewed to low complexity; sequence QEGQTGEKTTTTPTT. Residues 1163 to 1189 are compositionally biased toward basic and acidic residues; that stretch reads DVTKHGPKAGEPEVTKEEIPYETKRVL. Composition is skewed to acidic residues over residues 1282-1291 and 1302-1580; these read TGEIIEEPQD and SDAD…DSDS. 141 tandem repeats follow at residues 1301–1302, 1303–1304, 1305–1306, 1307–1308, 1309–1310, 1311–1312, 1313–1314, 1315–1316, 1317–1318, 1319–1320, 1321–1322, 1323–1324, 1325–1326, 1327–1328, 1329–1330, 1331–1332, 1333–1334, 1335–1336, 1337–1338, 1339–1340, 1341–1342, 1343–1344, 1345–1346, 1347–1348, 1349–1350, 1351–1352, 1353–1354, 1355–1356, 1357–1358, 1359–1360, 1361–1362, 1363–1364, 1365–1366, 1367–1368, 1369–1370, 1371–1372, 1373–1374, 1375–1376, 1377–1378, 1379–1380, 1381–1382, 1383–1384, 1385–1386, 1387–1388, 1389–1390, 1391–1392, 1393–1394, 1395–1396, 1397–1398, 1399–1400, 1401–1402, 1403–1404, 1405–1406, 1407–1408, 1409–1410, 1411–1412, 1413–1414, 1415–1416, 1417–1418, 1419–1420, 1421–1422, 1423–1424, 1425–1426, 1427–1428, 1429–1430, 1431–1432, 1433–1434, 1435–1436, 1437–1438, 1439–1440, 1441–1442, 1443–1444, 1445–1446, 1447–1448, 1449–1450, 1451–1452, 1453–1454, 1455–1456, 1457–1458, 1459–1460, 1461–1462, 1463–1464, 1465–1466, 1467–1468, 1469–1470, 1471–1472, 1473–1474, 1475–1476, 1477–1478, 1479–1480, 1481–1482, 1483–1484, 1485–1486, 1487–1488, 1489–1490, 1491–1492, 1493–1494, 1495–1496, 1497–1498, 1499–1500, 1501–1502, 1503–1504, 1505–1506, 1507–1508, 1509–1510, 1511–1512, 1513–1514, 1515–1516, 1517–1518, 1519–1520, 1521–1522, 1523–1524, 1525–1526, 1527–1528, 1529–1530, 1531–1532, 1533–1534, 1535–1536, 1537–1538, 1539–1540, 1541–1542, 1543–1544, 1545–1546, 1547–1548, 1549–1550, 1551–1552, 1553–1554, 1555–1556, 1557–1558, 1559–1560, 1561–1562, 1563–1564, 1565–1566, 1567–1568, 1569–1570, 1571–1572, 1573–1574, 1575–1576, 1577–1578, 1579–1580, and 1581–1582. The segment at 1301–1582 is 141 X 2 AA tandem repeats of D-[SAG]; that stretch reads DSDADSDSDA…DSDSDSDSDA (282 aa). The span at 1581 to 1599 shows a compositional bias: basic and acidic residues; that stretch reads DADRDHNDKTDKPNNKELP. The short motif at 1598 to 1602 is the LPXTG sorting signal element; that stretch reads LPDTG. Thr1601 is modified (pentaglycyl murein peptidoglycan amidated threonine). Residues 1602–1637 constitute a propeptide, removed by sortase; the sequence is GNDAQNNGTLFGSLFAALGGLFLVGRRRKNKNNEEK.

It is found in the secreted. The protein localises to the cell wall. Functionally, could have a role in preventing adhesion at some stages during an infection. The sequence is that of Surface protein (pls) from Staphylococcus aureus.